Here is a 276-residue protein sequence, read N- to C-terminus: Formamidopyrimidine-DNA glycosylase (276 aa).

Catalysis depends on Pro2, which acts as the Schiff-base intermediate with DNA. Glu3 functions as the Proton donor in the catalytic mechanism. The active-site Proton donor; for beta-elimination activity is the Lys58. DNA-binding residues include His92, Arg111, and Lys154. The FPG-type zinc finger occupies 239-273 (QVYGHVGEPCPVCGTKFEKIKVNGRGTTFCPHCQV). Arg263 (proton donor; for delta-elimination activity) is an active-site residue.

The protein belongs to the FPG family. As to quaternary structure, monomer. It depends on Zn(2+) as a cofactor.

It carries out the reaction Hydrolysis of DNA containing ring-opened 7-methylguanine residues, releasing 2,6-diamino-4-hydroxy-5-(N-methyl)formamidopyrimidine.. The enzyme catalyses 2'-deoxyribonucleotide-(2'-deoxyribose 5'-phosphate)-2'-deoxyribonucleotide-DNA = a 3'-end 2'-deoxyribonucleotide-(2,3-dehydro-2,3-deoxyribose 5'-phosphate)-DNA + a 5'-end 5'-phospho-2'-deoxyribonucleoside-DNA + H(+). In terms of biological role, involved in base excision repair of DNA damaged by oxidation or by mutagenic agents. Acts as a DNA glycosylase that recognizes and removes damaged bases. Has a preference for oxidized purines, such as 7,8-dihydro-8-oxoguanine (8-oxoG). Has AP (apurinic/apyrimidinic) lyase activity and introduces nicks in the DNA strand. Cleaves the DNA backbone by beta-delta elimination to generate a single-strand break at the site of the removed base with both 3'- and 5'-phosphates. The polypeptide is Formamidopyrimidine-DNA glycosylase (Lactobacillus helveticus (strain DPC 4571)).